We begin with the raw amino-acid sequence, 527 residues long: MNKNVLKFVSRSLLIFSMTGLISNYNSSNVLAKGNVEEHSLINNGQVVTSNTKCNLAKDNSSDIDKNIYGLSYDPRKILSYNGEQVENFVPAEGFENPDKFIVVKREKKSISDSTADISIIDSINDRTYPGAIQLANRNLMENKPDIISCERKPITISVDLPGMAEDGKKVVNSPTYSSVNSAINSILDTWNSKYSSKYTIPTRMSYSDTMVYSQSQLSAAVGCNFKALNKALNIDFDSIFKGEKKVMLLAYKQIFYTVSVDPPNRPSDLFGDSVTFDELALKGINNNNPPAYVSNVAYGRTIYVKLETTSKSSHVKAAFKALINNQDISSNAEYKDILNQSSFTATVLGGGAQEHNKIITKDFDEIRNIIKNNSVYSPQNPGYPISYTTTFLKDNSIASVNNKTEYIETTATEYTNGKIVLDHSGAYVAQFQVTWDEVSYDEKGNEIVEHKAWEGNNRDRTAHFNTEIYLKGNARNISVKIRECTGLAWEWWRTIVDVKNIPLAKERTFYIWGTTLYPKTSIETKM.

The signal sequence occupies residues 1–32; it reads MNKNVLKFVSRSLLIFSMTGLISNYNSSNVLA. 4 beta stranded membrane passes run 215–228, 235–244, 313–322, and 330–342; these read QSQL…NFKA, IDFDSIFKGE, SSHVKAAFKA, and SSNA…LNQS. Residues 484 to 494 carry the Conserved undecapeptide motif; the sequence is ECTGLAWEWWR. A Cholesterol binding motif is present at residues 516–517; sequence TL.

This sequence belongs to the cholesterol-dependent cytolysin family. In terms of assembly, homooligomeric pore complex containing 35-50 subunits; when inserted in the host membrane. Purified 48 and 53 kDa proteins with 4 different pIs (6.1, 5.6, 5.3 and 6.6) in decreasing order of activity.

It is found in the secreted. It localises to the host cell membrane. Cytolysis of host cells is inhibited by cholesterol. A cholesterol-dependent toxin that causes cytolysis by forming pores in cholesterol-containing host membranes. After binding to target membranes, the protein undergoes a major conformation change, leading to its insertion in the host membrane and formation of an oligomeric pore complex. Cholesterol is required for binding to host membranes, membrane insertion and pore formation; cholesterol binding is mediated by a Thr-Leu pair in the C-terminus. The chain is Tetanolysin from Clostridium tetani (strain Massachusetts / E88).